A 357-amino-acid polypeptide reads, in one-letter code: H-2 class I histocompatibility antigen, D-37 alpha chain (357 aa).

Positions 1–20 (MLLFAHLLQLLVSATVPTQS) are cleaved as a signal peptide. Residues 21-110 (SPHSLRYFTT…LLGYYNQSND (90 aa)) form an alpha-1 region. Residues 21–304 (SPHSLRYFTT…EPPPSTVSNM (284 aa)) lie on the Extracellular side of the membrane. N-linked (GlcNAc...) asparagine glycosylation is present at Asn-106. Residues 111–202 (ESHTLQWMYG…RLGNETLQRS (92 aa)) form an alpha-2 region. Cys-121 and Cys-184 are joined by a disulfide. N-linked (GlcNAc...) asparagine glycosylation is present at Asn-196. Residues 203–294 (DPPKAHVTHH…GLPEPLTLRW (92 aa)) are alpha-3. Positions 205–293 (PKAHVTHHPR…EGLPEPLTLR (89 aa)) constitute an Ig-like C1-type domain. Residues Cys-223 and Cys-279 are joined by a disulfide bond. A connecting peptide region spans residues 295–304 (EPPPSTVSNM). Residues 305-327 (VIIAVLVVLGAVIILGAVVAFVM) form a helical membrane-spanning segment. At 328–357 (KRRRHIGVKGCYAHVLGSKSFQTSDWPQKA) the chain is on the cytoplasmic side. Ser-347 is modified (phosphoserine).

The protein belongs to the MHC class I family. In terms of assembly, heterodimer of an alpha chain and a beta chain (beta-2-microglobulin).

It localises to the membrane. Its function is as follows. Involved in the presentation of foreign antigens to the immune system. In Mus musculus (Mouse), this protein is H-2 class I histocompatibility antigen, D-37 alpha chain (H2-T23).